The primary structure comprises 87 residues: Virulence protein PagD (87 aa).

The N-terminal stretch at 1-20 (MKHHAFMLWSLLIFSFHVLA) is a signal peptide. The interval 46 to 87 (QPPTNTDKKQARQISSPSCPTTKPMMSAPVNDARKGNTFSRT) is disordered. Positions 57–66 (RQISSPSCPT) are enriched in polar residues.

Putative function in virulence. Could be involved in promoting S.typhimurium survival within macrophages. The polypeptide is Virulence protein PagD (pagD) (Salmonella typhimurium (strain LT2 / SGSC1412 / ATCC 700720)).